A 125-amino-acid polypeptide reads, in one-letter code: UPF0102 protein ABO_0585 (125 aa).

This sequence belongs to the UPF0102 family.

This is UPF0102 protein ABO_0585 from Alcanivorax borkumensis (strain ATCC 700651 / DSM 11573 / NCIMB 13689 / SK2).